The following is a 113-amino-acid chain: U11-theraphotoxin-Hhn1a (113 aa).

A signal peptide spans 1-21; that stretch reads MNTVRVTFLLVFVLAVSLGQA. A propeptide spanning residues 22–74 is cleaved from the precursor; the sequence is DKDENRMEMQGKTEQGKSYLDFAENLLLQKLEELEAKLLEEDSEESRNSRQKR. 3 disulfides stabilise this stretch: cysteine 75–cysteine 90, cysteine 82–cysteine 95, and cysteine 89–cysteine 110.

It belongs to the neurotoxin 14 (magi-1) family. 01 (HNTX-16) subfamily. As to expression, expressed by the venom gland.

It localises to the secreted. Probable ion channel inhibitor. The sequence is that of U11-theraphotoxin-Hhn1a from Cyriopagopus hainanus (Chinese bird spider).